Reading from the N-terminus, the 224-residue chain is 7-cyano-7-deazaguanine synthase (224 aa).

Residue 10-20 (LSGGLDSATVA) participates in ATP binding. 4 residues coordinate Zn(2+): Cys-189, Cys-199, Cys-202, and Cys-205.

Belongs to the QueC family. It depends on Zn(2+) as a cofactor.

It catalyses the reaction 7-carboxy-7-deazaguanine + NH4(+) + ATP = 7-cyano-7-deazaguanine + ADP + phosphate + H2O + H(+). It functions in the pathway purine metabolism; 7-cyano-7-deazaguanine biosynthesis. Its function is as follows. Catalyzes the ATP-dependent conversion of 7-carboxy-7-deazaguanine (CDG) to 7-cyano-7-deazaguanine (preQ(0)). This Azotobacter vinelandii (strain DJ / ATCC BAA-1303) protein is 7-cyano-7-deazaguanine synthase.